Here is a 544-residue protein sequence, read N- to C-terminus: Pyruvate kinase (544 aa).

Residue arginine 31 coordinates substrate. 2 residues coordinate K(+): asparagine 33 and aspartate 61. 33–36 provides a ligand contact to ATP; it reads NSAH. Arginine 68 lines the ATP pocket. Glutamate 204 is a Mg(2+) binding site. The substrate site is built by glycine 227, aspartate 228, and threonine 260. Residue aspartate 228 participates in Mg(2+) binding.

It belongs to the pyruvate kinase family. In terms of assembly, homotetramer. Mg(2+) is required as a cofactor. The cofactor is K(+).

The enzyme catalyses pyruvate + ATP = phosphoenolpyruvate + ADP + H(+). The protein operates within carbohydrate degradation; glycolysis; pyruvate from D-glyceraldehyde 3-phosphate: step 5/5. The polypeptide is Pyruvate kinase (Thermoplasma acidophilum (strain ATCC 25905 / DSM 1728 / JCM 9062 / NBRC 15155 / AMRC-C165)).